Reading from the N-terminus, the 317-residue chain is Ubiquinone biosynthesis protein COQ9, mitochondrial (317 aa).

Residues 1-46 constitute a mitochondrion transit peptide; the sequence is MAASVARVLKAAGGRQLLLMVARRRPVLRQPFLLMPRKFWGTSALR. A disordered region spans residues 45 to 97; sequence LRSEDQKQPPFSSTSAHAGTPEHAEEQYQQQQPPPRYTDQAGEESEGYESEEQ. A compositionally biased stretch (acidic residues) spans 85–96; it reads AGEESEGYESEE. R243 serves as a coordination point for a 1,2-diacylglycero-3-phosphoethanolamine.

Belongs to the COQ9 family. In terms of assembly, homodimer. Heterodimer; two heterodimers of COQ7:COQ9 come together on the same side of the lipid pseudo-bilayer and form a curved tetramer with a hydrophobic surface suitable for membrane interaction. These two tetramers assemble into a soluble octamer with a pseudo-bilayer of lipids captured within. Interacts with COQ7; this interaction allows ubiquinone (CoQ) isoprene intermediates presentation to COQ7 and facilitates the COQ7-mediated hydroxylase step.

Its subcellular location is the mitochondrion. It participates in cofactor biosynthesis; ubiquinone biosynthesis. In terms of biological role, membrane-associated protein that warps the membrane surface to access and bind aromatic isoprenes with high specificity, including ubiquinone (CoQ) isoprene intermediates and presents them directly to COQ7, therefore facilitating the COQ7-mediated hydroxylase step. Participates in the biosynthesis of coenzyme Q, also named ubiquinone, an essential lipid-soluble electron transporter for aerobic cellular respiration. This chain is Ubiquinone biosynthesis protein COQ9, mitochondrial, found in Xenopus tropicalis (Western clawed frog).